The sequence spans 194 residues: Outer-membrane lipoprotein LolB (194 aa).

The signal sequence occupies residues 1–18; the sequence is MTLLLRLFTLGCLLLLAG. Cys19 is lipidated: N-palmitoyl cysteine. Cys19 is lipidated: S-diacylglycerol cysteine.

This sequence belongs to the LolB family. As to quaternary structure, monomer.

It localises to the cell outer membrane. Functionally, plays a critical role in the incorporation of lipoproteins in the outer membrane after they are released by the LolA protein. The protein is Outer-membrane lipoprotein LolB of Aeromonas hydrophila subsp. hydrophila (strain ATCC 7966 / DSM 30187 / BCRC 13018 / CCUG 14551 / JCM 1027 / KCTC 2358 / NCIMB 9240 / NCTC 8049).